A 381-amino-acid polypeptide reads, in one-letter code: Sulfate adenylyltransferase (381 aa).

Belongs to the sulfate adenylyltransferase family.

It catalyses the reaction sulfate + ATP + H(+) = adenosine 5'-phosphosulfate + diphosphate. It participates in sulfur metabolism; hydrogen sulfide biosynthesis; sulfite from sulfate: step 1/3. This chain is Sulfate adenylyltransferase, found in Chloroflexus aurantiacus (strain ATCC 29366 / DSM 635 / J-10-fl).